Here is a 565-residue protein sequence, read N- to C-terminus: Thiol:disulfide interchange protein DsbD (565 aa).

Residues methionine 1–alanine 19 form the signal peptide. 2 disulfides stabilise this stretch: cysteine 122–cysteine 128 and cysteine 182–cysteine 304. The next 7 helical transmembrane spans lie at leucine 163–valine 183, leucine 208–valine 228, tyrosine 243–phenylalanine 263, isoleucine 296–isoleucine 316, tryptophan 323–isoleucine 343, tryptophan 357–leucine 377, and valine 384–threonine 404. In terms of domain architecture, Thioredoxin spans tryptophan 434–proline 565. Residues cysteine 480 and cysteine 483 are joined by a disulfide bond.

It belongs to the thioredoxin family. DsbD subfamily.

It localises to the cell inner membrane. It carries out the reaction [protein]-dithiol + NAD(+) = [protein]-disulfide + NADH + H(+). It catalyses the reaction [protein]-dithiol + NADP(+) = [protein]-disulfide + NADPH + H(+). Its function is as follows. Required to facilitate the formation of correct disulfide bonds in some periplasmic proteins and for the assembly of the periplasmic c-type cytochromes. Acts by transferring electrons from cytoplasmic thioredoxin to the periplasm. This transfer involves a cascade of disulfide bond formation and reduction steps. The protein is Thiol:disulfide interchange protein DsbD of Shigella boydii serotype 4 (strain Sb227).